We begin with the raw amino-acid sequence, 206 residues long: Thymidylate kinase (206 aa).

11–18 (GIDGAGKT) provides a ligand contact to ATP.

This sequence belongs to the thymidylate kinase family.

The catalysed reaction is dTMP + ATP = dTDP + ADP. Functionally, phosphorylation of dTMP to form dTDP in both de novo and salvage pathways of dTTP synthesis. The polypeptide is Thymidylate kinase (Burkholderia cenocepacia (strain HI2424)).